An 860-amino-acid chain; its full sequence is Leucine--tRNA ligase (860 aa).

The 'HIGH' region motif lies at 42–52; it reads PYPSGRLHMGH. The short motif at 619-623 is the 'KMSKS' region element; the sequence is KMSKS. Residue Lys-622 participates in ATP binding.

This sequence belongs to the class-I aminoacyl-tRNA synthetase family.

The protein resides in the cytoplasm. The catalysed reaction is tRNA(Leu) + L-leucine + ATP = L-leucyl-tRNA(Leu) + AMP + diphosphate. The sequence is that of Leucine--tRNA ligase from Escherichia coli (strain SMS-3-5 / SECEC).